Reading from the N-terminus, the 847-residue chain is Alanine--tRNA ligase (847 aa).

Residues His554, His558, Cys656, and His660 each coordinate Zn(2+).

It belongs to the class-II aminoacyl-tRNA synthetase family. Zn(2+) serves as cofactor.

The protein localises to the cytoplasm. It catalyses the reaction tRNA(Ala) + L-alanine + ATP = L-alanyl-tRNA(Ala) + AMP + diphosphate. In terms of biological role, catalyzes the attachment of alanine to tRNA(Ala) in a two-step reaction: alanine is first activated by ATP to form Ala-AMP and then transferred to the acceptor end of tRNA(Ala). Also edits incorrectly charged Ser-tRNA(Ala) and Gly-tRNA(Ala) via its editing domain. The chain is Alanine--tRNA ligase from Helicobacter pylori (strain ATCC 700392 / 26695) (Campylobacter pylori).